A 137-amino-acid chain; its full sequence is Phosphoinositide-interacting protein (137 aa).

The next 2 membrane-spanning stretches (helical) occupy residues 56-76 and 94-114; these read IVIM…TCLA and PGFL…VPII.

In terms of assembly, interacts with TRPV1.

It is found in the membrane. Its function is as follows. Regulatory subunit of TRPV1, a molecular sensor of noxious heat and capsaicin. Positively regulates TRPV1 channel activity via phosphatidylinositol 4,5-bisphosphate (PIP2). Binds various phosphoinositide, including phosphatidylinositol 4,5-bisphosphate (PIP2), but not phosphatidylinositol (PI). This chain is Phosphoinositide-interacting protein (PIRT), found in Homo sapiens (Human).